We begin with the raw amino-acid sequence, 557 residues long: Eudesmanediol synthase (557 aa).

Residues Asp-310 and Asp-314 each contribute to the Mg(2+) site. Substrate contacts are provided by Asp-310, Asp-314, and Arg-450. Residues 310–314 (DDTFD) carry the DDXXD motif motif. Positions 453 and 457 each coordinate Mg(2+).

It belongs to the terpene synthase family. As to quaternary structure, monomer. Mg(2+) serves as cofactor. Requires Mn(2+) as cofactor.

It is found in the cytoplasm. It carries out the reaction (2E,6E)-farnesyl diphosphate + 2 H2O = 7-epi-ent-eudesmane-5,11-diol + diphosphate. It participates in secondary metabolite biosynthesis; terpenoid biosynthesis. In terms of biological role, component of the volatile terpenes biosynthesis pathways. Dihydroxylated sesquiterpenoid synthase that generates dually hydroxylated products directly from (E,E)-farnesyl diphosphate, primarily eudesmane-2,11-diol, along with two closely related structural isomers. This Zea mays (Maize) protein is Eudesmanediol synthase.